Consider the following 1733-residue polypeptide: Polyketide synthase Pks13 (1733 aa).

In terms of domain architecture, Carrier 1 spans Glu17–Glu95. The residue at position 55 (Ser55) is an O-(pantetheine 4'-phosphoryl)serine. A Ketosynthase family 3 (KS3) domain is found at Arg116–Glu541. The active-site Acyl-thioester intermediate; for beta-ketoacyl synthase activity is the Cys287. Catalysis depends on for beta-ketoacyl synthase activity residues His423 and His463. Residues Val548 to Ala560 show a composition bias toward basic and acidic residues. A disordered region spans residues Val548 to Ala567. The acyltransferase stretch occupies residues Val713–Val1034. The Acyl-ester intermediate; for acyltransferase activity role is filled by Ser801. The 78-residue stretch at Glu1232–Arg1309 folds into the Carrier 2 domain. Ser1266 carries the post-translational modification O-(pantetheine 4'-phosphoryl)serine. The disordered stretch occupies residues Pro1344 to Ala1368. The segment at Pro1470–Arg1563 is thioesterase-like. The active-site For thioesterase-like activity is the Ser1533.

4'-phosphopantetheine is transferred from CoA to specific serines of apo-Pks13 by PptT.

It functions in the pathway lipid metabolism; mycolic acid biosynthesis. Its activity is regulated as follows. The presence of FadD32 is necessary for the transfer of the acyl chain from the AMP carrier onto Pks13. Its function is as follows. Involved in the biosynthesis of mycolic acids. Forms, with FadD32, the initiation module of the mycolic condensation system. Synthesizes, in coupled reaction with FadD32, the biosynthetic precursors of mycolic acids, alpha-alkyl beta-ketoacids, via the condensation of two long chain fatty acid derivatives, a very long meromycoloyl-AMP and a shorter 2-carboxyacyl-CoA. The acyl chain of the acyl-AMP produced by FadD32 is specifically transferred onto the N-terminal ACP domain of Pks13, and then transferred onto the KS domain. The extender unit carboxyacyl-CoA is specifically loaded onto the AT domain, which catalyzes the covalent attachment of the carboxyacyl chain to its active site, and its subsequent transfer onto the P-pant arm of the C-terminal ACP domain. The KS domain catalyzes the condensation between the two loaded fatty acyl chains to produce an alpha-alkyl beta-ketothioester linked to the C-ACP domain. Then, the thioesterase-like domain acts as a transacylase and is responsible for both the release and the transfer of the alpha-alkyl beta-ketoacyl chain onto a polyol acceptor molecule, particularly trehalose, leading to the formation of the trehalose monomycolate precursor. The sequence is that of Polyketide synthase Pks13 from Mycobacterium tuberculosis (strain ATCC 25618 / H37Rv).